Consider the following 634-residue polypeptide: Chaperone protein HtpG (634 aa).

Residues 1 to 344 (MNETVANNKE…SNDLPLNVSR (344 aa)) form an a; substrate-binding region. Residues 345-561 (EILQDNKVTQ…DFEMGTQMAK (217 aa)) are b. Positions 562–634 (LLAAAGQAVP…TAINSLLTKG (73 aa)) are c.

It belongs to the heat shock protein 90 family. Homodimer.

It localises to the cytoplasm. Molecular chaperone. Has ATPase activity. The protein is Chaperone protein HtpG of Vibrio vulnificus (strain YJ016).